Reading from the N-terminus, the 348-residue chain is UDP-3-O-acylglucosamine N-acyltransferase (348 aa).

Residue histidine 257 is the Proton acceptor of the active site.

The protein belongs to the transferase hexapeptide repeat family. LpxD subfamily. Homotrimer.

The catalysed reaction is a UDP-3-O-[(3R)-3-hydroxyacyl]-alpha-D-glucosamine + a (3R)-hydroxyacyl-[ACP] = a UDP-2-N,3-O-bis[(3R)-3-hydroxyacyl]-alpha-D-glucosamine + holo-[ACP] + H(+). It participates in bacterial outer membrane biogenesis; LPS lipid A biosynthesis. Its function is as follows. Catalyzes the N-acylation of UDP-3-O-acylglucosamine using 3-hydroxyacyl-ACP as the acyl donor. Is involved in the biosynthesis of lipid A, a phosphorylated glycolipid that anchors the lipopolysaccharide to the outer membrane of the cell. This Bartonella henselae (strain ATCC 49882 / DSM 28221 / CCUG 30454 / Houston 1) (Rochalimaea henselae) protein is UDP-3-O-acylglucosamine N-acyltransferase.